Consider the following 372-residue polypeptide: tRNA pseudouridine synthase D (372 aa).

The Nucleophile role is filled by Asp-85. The TRUD domain maps to 160–330 (GFANYFGYQR…MQGSRRFMWG (171 aa)).

The protein belongs to the pseudouridine synthase TruD family.

The enzyme catalyses uridine(13) in tRNA = pseudouridine(13) in tRNA. Responsible for synthesis of pseudouridine from uracil-13 in transfer RNAs. The polypeptide is tRNA pseudouridine synthase D (Campylobacter jejuni subsp. jejuni serotype O:6 (strain 81116 / NCTC 11828)).